The chain runs to 193 residues: ATP-dependent Clp protease proteolytic subunit (193 aa).

Ser-98 (nucleophile) is an active-site residue. The active site involves His-123.

It belongs to the peptidase S14 family. As to quaternary structure, fourteen ClpP subunits assemble into 2 heptameric rings which stack back to back to give a disk-like structure with a central cavity, resembling the structure of eukaryotic proteasomes.

The protein resides in the cytoplasm. It catalyses the reaction Hydrolysis of proteins to small peptides in the presence of ATP and magnesium. alpha-casein is the usual test substrate. In the absence of ATP, only oligopeptides shorter than five residues are hydrolyzed (such as succinyl-Leu-Tyr-|-NHMec, and Leu-Tyr-Leu-|-Tyr-Trp, in which cleavage of the -Tyr-|-Leu- and -Tyr-|-Trp bonds also occurs).. Cleaves peptides in various proteins in a process that requires ATP hydrolysis. Has a chymotrypsin-like activity. Plays a major role in the degradation of misfolded proteins. This Mannheimia succiniciproducens (strain KCTC 0769BP / MBEL55E) protein is ATP-dependent Clp protease proteolytic subunit.